The sequence spans 110 residues: MRSKVEILPSTLIFHELIGLEIKVSNSTNPSLIGIRGRVINETKNMLVVENSESRELKIPKADSEFVFRIPAELSEKGRRSDIFVKIQGNLLLSQPENRIKNIKKLRKWG.

The protein belongs to the eukaryotic/archaeal RNase P protein component 1 family. As to quaternary structure, consists of a catalytic RNA component and at least 4-5 protein subunits.

The protein localises to the cytoplasm. The enzyme catalyses Endonucleolytic cleavage of RNA, removing 5'-extranucleotides from tRNA precursor.. In terms of biological role, part of ribonuclease P, a protein complex that generates mature tRNA molecules by cleaving their 5'-ends. The chain is Ribonuclease P protein component 1 from Methanosarcina mazei (strain ATCC BAA-159 / DSM 3647 / Goe1 / Go1 / JCM 11833 / OCM 88) (Methanosarcina frisia).